A 671-amino-acid polypeptide reads, in one-letter code: DNA ligase (671 aa).

NAD(+) is bound by residues 35 to 39 (DQQYD), 84 to 85 (SL), and Glu113. Residue Lys115 is the N6-AMP-lysine intermediate of the active site. NAD(+) is bound by residues Arg136, Glu170, Lys285, and Lys309. Residues Cys403, Cys406, Cys421, and Cys426 each contribute to the Zn(2+) site. Residues 588–671 (TTQTIFTNKK…QIIENSQIKL (84 aa)) form the BRCT domain.

Belongs to the NAD-dependent DNA ligase family. LigA subfamily. Mg(2+) serves as cofactor. Requires Mn(2+) as cofactor.

It catalyses the reaction NAD(+) + (deoxyribonucleotide)n-3'-hydroxyl + 5'-phospho-(deoxyribonucleotide)m = (deoxyribonucleotide)n+m + AMP + beta-nicotinamide D-nucleotide.. Functionally, DNA ligase that catalyzes the formation of phosphodiester linkages between 5'-phosphoryl and 3'-hydroxyl groups in double-stranded DNA using NAD as a coenzyme and as the energy source for the reaction. It is essential for DNA replication and repair of damaged DNA. This Onion yellows phytoplasma (strain OY-M) protein is DNA ligase.